We begin with the raw amino-acid sequence, 265 residues long: Beta-lactamase SHV-4 (265 aa).

Residue Ser-45 is the Acyl-ester intermediate of the active site. A disulfide bridge links Cys-52 with Cys-98. Glu-143 acts as the Proton acceptor in catalysis. 209–211 (KTG) is a binding site for substrate.

Belongs to the class-A beta-lactamase family.

It catalyses the reaction a beta-lactam + H2O = a substituted beta-amino acid. In terms of biological role, SHV enzymes hydrolyze broad spectrum cephalosporins notably cefotaxime and ceftazidime. SHV-4 causes particularly high levels of resistance to aztreonam and ceftazidime. This Klebsiella pneumoniae protein is Beta-lactamase SHV-4 (bla).